We begin with the raw amino-acid sequence, 179 residues long: Large ribosomal subunit protein uL5 (179 aa).

Belongs to the universal ribosomal protein uL5 family. In terms of assembly, part of the 50S ribosomal subunit; part of the 5S rRNA/L5/L18/L25 subcomplex. Contacts the 5S rRNA and the P site tRNA. Forms a bridge to the 30S subunit in the 70S ribosome.

This is one of the proteins that bind and probably mediate the attachment of the 5S RNA into the large ribosomal subunit, where it forms part of the central protuberance. In the 70S ribosome it contacts protein S13 of the 30S subunit (bridge B1b), connecting the 2 subunits; this bridge is implicated in subunit movement. Contacts the P site tRNA; the 5S rRNA and some of its associated proteins might help stabilize positioning of ribosome-bound tRNAs. The protein is Large ribosomal subunit protein uL5 of Shewanella sp. (strain ANA-3).